A 102-amino-acid polypeptide reads, in one-letter code: Citrate lyase acyl carrier protein (102 aa).

Ser14 carries the O-(phosphoribosyl dephospho-coenzyme A)serine modification.

The protein belongs to the CitD family. In terms of assembly, oligomer with a subunit composition of (alpha,beta,gamma)6.

Its subcellular location is the cytoplasm. In terms of biological role, covalent carrier of the coenzyme of citrate lyase. The polypeptide is Citrate lyase acyl carrier protein (Streptococcus pyogenes serotype M18 (strain MGAS8232)).